Consider the following 295-residue polypeptide: Acetylglutamate kinase (295 aa).

Substrate contacts are provided by residues 64-65 (GG), arginine 86, and asparagine 190.

Belongs to the acetylglutamate kinase family. ArgB subfamily.

The protein localises to the cytoplasm. It carries out the reaction N-acetyl-L-glutamate + ATP = N-acetyl-L-glutamyl 5-phosphate + ADP. Its pathway is amino-acid biosynthesis; L-arginine biosynthesis; N(2)-acetyl-L-ornithine from L-glutamate: step 2/4. Its function is as follows. Catalyzes the ATP-dependent phosphorylation of N-acetyl-L-glutamate. This Heliobacterium modesticaldum (strain ATCC 51547 / Ice1) protein is Acetylglutamate kinase.